A 364-amino-acid chain; its full sequence is NAC transcription factor 56 (364 aa).

The segment at 1–23 is disordered; sequence MESTDSSGGPPPPQPNLPPGFRF. Positions 9–18 are enriched in pro residues; it reads GPPPPQPNLP. One can recognise an NAC domain in the interval 17-178; sequence LPPGFRFHPT…DWVLCRIYKK (162 aa). Residues 116–184 mediate DNA binding; that stretch reads VGVKKALVFY…IYKKNNASRH (69 aa).

In terms of tissue distribution, stamen specific, in anthers from stage 8. Expressed in the outer integument, but seems not expressed in the embryo at the torpedo stage.

It is found in the nucleus. Its function is as follows. Transcription factor of the NAC family. Together with NAC018/NARS2, regulates embryogenesis by regulating the development and degeneration of ovule integuments, a process required for intertissue communication between the embryo and the maternal integument. This Arabidopsis thaliana (Mouse-ear cress) protein is NAC transcription factor 56.